A 455-amino-acid chain; its full sequence is Argininosuccinate lyase (455 aa).

Belongs to the lyase 1 family. Argininosuccinate lyase subfamily.

It localises to the cytoplasm. It catalyses the reaction 2-(N(omega)-L-arginino)succinate = fumarate + L-arginine. It participates in amino-acid biosynthesis; L-arginine biosynthesis; L-arginine from L-ornithine and carbamoyl phosphate: step 3/3. This is Argininosuccinate lyase from Shewanella baltica (strain OS155 / ATCC BAA-1091).